Reading from the N-terminus, the 125-residue chain is Glutaredoxin-C1 (125 aa).

A Glutaredoxin domain is found at Val19–Ala119. The cysteines at positions 39 and 42 are disulfide-linked.

It belongs to the glutaredoxin family. CPYC subfamily.

Its subcellular location is the cytoplasm. Has a glutathione-disulfide oxidoreductase activity in the presence of NADPH and glutathione reductase. Reduces low molecular weight disulfides and proteins. The chain is Glutaredoxin-C1 (GRXC1) from Arabidopsis thaliana (Mouse-ear cress).